The following is a 373-amino-acid chain: tRNA (guanine(26)-N(2))-dimethyltransferase (373 aa).

The region spanning 2–365 is the Trm1 methyltransferase domain; it reads KIISEGETKL…AELSDLVVLI (364 aa). 5 residues coordinate S-adenosyl-L-methionine: R35, R66, D86, D113, and A114.

Belongs to the class I-like SAM-binding methyltransferase superfamily. Trm1 family.

The catalysed reaction is guanosine(26) in tRNA + 2 S-adenosyl-L-methionine = N(2)-dimethylguanosine(26) in tRNA + 2 S-adenosyl-L-homocysteine + 2 H(+). Its function is as follows. Dimethylates a single guanine residue at position 26 of a number of tRNAs using S-adenosyl-L-methionine as donor of the methyl groups. The polypeptide is tRNA (guanine(26)-N(2))-dimethyltransferase (Methanococcus maripaludis (strain C7 / ATCC BAA-1331)).